Reading from the N-terminus, the 207-residue chain is Histidine biosynthesis bifunctional protein HisIE (207 aa).

Residues 1 to 117 form a phosphoribosyl-AMP cyclohydrolase region; that stretch reads MQNFKELNEK…KISKNADFVF (117 aa). The tract at residues 118-207 is phosphoribosyl-ATP pyrophosphohydrolase; the sequence is LARLEKLINA…ISKLKERHKA (90 aa).

In the N-terminal section; belongs to the PRA-CH family. It in the C-terminal section; belongs to the PRA-PH family.

The protein resides in the cytoplasm. It catalyses the reaction 1-(5-phospho-beta-D-ribosyl)-ATP + H2O = 1-(5-phospho-beta-D-ribosyl)-5'-AMP + diphosphate + H(+). The catalysed reaction is 1-(5-phospho-beta-D-ribosyl)-5'-AMP + H2O = 1-(5-phospho-beta-D-ribosyl)-5-[(5-phospho-beta-D-ribosylamino)methylideneamino]imidazole-4-carboxamide. It functions in the pathway amino-acid biosynthesis; L-histidine biosynthesis; L-histidine from 5-phospho-alpha-D-ribose 1-diphosphate: step 2/9. Its pathway is amino-acid biosynthesis; L-histidine biosynthesis; L-histidine from 5-phospho-alpha-D-ribose 1-diphosphate: step 3/9. The sequence is that of Histidine biosynthesis bifunctional protein HisIE (hisI) from Campylobacter jejuni subsp. jejuni serotype O:2 (strain ATCC 700819 / NCTC 11168).